A 298-amino-acid chain; its full sequence is Anamorsin homolog (298 aa).

Residues 1–143 (MTQLIITYQS…IKAEKPSWKP (143 aa)) are N-terminal SAM-like domain. A linker region spans residues 143–162 (PEEGKVLVDDIDLEGSVPDI). Cys-175, Cys-182, Cys-185, and Cys-187 together coordinate [2Fe-2S] cluster. Residues 175 to 187 (CKSKERACNNCNC) form a fe-S binding site A region. Cys-218, Cys-221, Cys-229, and Cys-232 together coordinate [4Fe-4S] cluster. 2 short sequence motifs (cx2C motif) span residues 218–221 (CGNC) and 229–232 (CSGC). Residues 218–232 (CGNCYLGDAFRCSGC) form a fe-S binding site B region.

This sequence belongs to the anamorsin family. As to quaternary structure, monomer. [2Fe-2S] cluster is required as a cofactor. [4Fe-4S] cluster serves as cofactor.

It is found in the cytoplasm. Its subcellular location is the mitochondrion intermembrane space. Functionally, component of the cytosolic iron-sulfur (Fe-S) protein assembly (CIA) machinery. Required for the maturation of extramitochondrial Fe-S proteins. Part of an electron transfer chain functioning in an early step of cytosolic Fe-S biogenesis, facilitating the de novo assembly of a [4Fe-4S] cluster on the cytosolic Fe-S scaffold complex. Electrons are transferred from NADPH via a FAD- and FMN-containing diflavin oxidoreductase. Together with the diflavin oxidoreductase, also required for the assembly of the diferric tyrosyl radical cofactor of ribonucleotide reductase (RNR), probably by providing electrons for reduction during radical cofactor maturation in the catalytic small subunit. In Cryptosporidium hominis, this protein is Anamorsin homolog.